Consider the following 238-residue polypeptide: Survival of motor neuron-related-splicing factor 30 (238 aa).

One can recognise a Tudor domain in the interval S72 to K132. A Nuclear localization signal motif is present at residues K142–K160. At S201 the chain carries Phosphoserine. N6-acetyllysine is present on K219.

The protein belongs to the SMN family. As to quaternary structure, associates with spliceosomes. Associates with U4/U5/U6 tri-snRNP and with U2 snRNP.

The protein localises to the nucleus speckle. It localises to the nucleus. The protein resides in the cajal body. Functionally, involved in spliceosome assembly. The chain is Survival of motor neuron-related-splicing factor 30 (SMNDC1) from Pongo abelii (Sumatran orangutan).